The primary structure comprises 342 residues: MKKIVFEKRDLSTEDSEAIANALMKGEIPEIQVSALLTSLAMKGESFEEIVGFARAMRNNAIKISYPEALDTAGTGGDGLGTINVSTITAIILSQLFPVAKHGNRSVSGKSGSADVLEALGYNINIAPELANKLIKENNFVFLFAQIYHPAMKNVANVRKTLGIRTIFNLLGPLTNPAGTRYQLIGLFSSKVMDIVAKAASLLDYKKVFIYHGEPGIDEISPYGYTTVYEITNGKIQQYRLHYSDFGLKRQIPIEKITATSANESAIKILRGVMGIDSDIRDFIGINVAVGLKLIGKAEDARDGFEYAMQLMESTIQHLRRIIESNGDIKKFDQLVRQVGKG.

Residues Gly-74, 77–78 (GD), Thr-82, 84–87 (NVST), 101–109 (KHGNRSVSG), and Ser-113 each bind 5-phospho-alpha-D-ribose 1-diphosphate. Gly-74 provides a ligand contact to anthranilate. Residue Ser-86 participates in Mg(2+) binding. Anthranilate is bound at residue Asn-104. Residue Arg-159 participates in anthranilate binding. Residues Asp-218 and Glu-219 each coordinate Mg(2+).

Belongs to the anthranilate phosphoribosyltransferase family. As to quaternary structure, homodimer. The cofactor is Mg(2+).

The catalysed reaction is N-(5-phospho-beta-D-ribosyl)anthranilate + diphosphate = 5-phospho-alpha-D-ribose 1-diphosphate + anthranilate. Its pathway is amino-acid biosynthesis; L-tryptophan biosynthesis; L-tryptophan from chorismate: step 2/5. Its function is as follows. Catalyzes the transfer of the phosphoribosyl group of 5-phosphorylribose-1-pyrophosphate (PRPP) to anthranilate to yield N-(5'-phosphoribosyl)-anthranilate (PRA). The protein is Anthranilate phosphoribosyltransferase of Sulfolobus acidocaldarius (strain ATCC 33909 / DSM 639 / JCM 8929 / NBRC 15157 / NCIMB 11770).